The sequence spans 235 residues: Phosphoribosylaminoimidazole-succinocarboxamide synthase (235 aa).

It belongs to the SAICAR synthetase family.

It carries out the reaction 5-amino-1-(5-phospho-D-ribosyl)imidazole-4-carboxylate + L-aspartate + ATP = (2S)-2-[5-amino-1-(5-phospho-beta-D-ribosyl)imidazole-4-carboxamido]succinate + ADP + phosphate + 2 H(+). The protein operates within purine metabolism; IMP biosynthesis via de novo pathway; 5-amino-1-(5-phospho-D-ribosyl)imidazole-4-carboxamide from 5-amino-1-(5-phospho-D-ribosyl)imidazole-4-carboxylate: step 1/2. The sequence is that of Phosphoribosylaminoimidazole-succinocarboxamide synthase from Streptococcus pneumoniae (strain JJA).